The primary structure comprises 152 residues: Deoxyuridine 5'-triphosphate nucleotidohydrolase (152 aa).

Substrate is bound by residues 71–73 (RSG), N84, 88–90 (LVD), and M98.

It belongs to the dUTPase family. The cofactor is Mg(2+).

The catalysed reaction is dUTP + H2O = dUMP + diphosphate + H(+). It participates in pyrimidine metabolism; dUMP biosynthesis; dUMP from dCTP (dUTP route): step 2/2. Functionally, this enzyme is involved in nucleotide metabolism: it produces dUMP, the immediate precursor of thymidine nucleotides and it decreases the intracellular concentration of dUTP so that uracil cannot be incorporated into DNA. This is Deoxyuridine 5'-triphosphate nucleotidohydrolase from Shewanella oneidensis (strain ATCC 700550 / JCM 31522 / CIP 106686 / LMG 19005 / NCIMB 14063 / MR-1).